An 809-amino-acid polypeptide reads, in one-letter code: Probable replication endonuclease from prophage-like region (809 aa).

Active-site O-(5'-phospho-DNA)-tyrosine intermediate residues include Y503 and Y507.

It belongs to the phage GPA family.

Functionally, possible endonuclease which induces a single-strand cut and initiates DNA replication. This chain is Probable replication endonuclease from prophage-like region, found in Salmonella typhimurium (strain LT2 / SGSC1412 / ATCC 700720).